A 227-amino-acid polypeptide reads, in one-letter code: Cytochrome c oxidase subunit 2 (227 aa).

Topologically, residues 1–14 are mitochondrial intermembrane; it reads MAYPFQLGFQDATS. Residues 15–45 traverse the membrane as a helical segment; that stretch reads PIMEELLHFHDHTLMIVFLISSLVLYIITLM. The Mitochondrial matrix portion of the chain corresponds to 46–59; the sequence is LTTKLTHTSTMDAQ. Residues 60 to 87 traverse the membrane as a helical segment; sequence EVETVWTILPAIILILIALPSLRILYMM. The Mitochondrial intermembrane portion of the chain corresponds to 88–227; the sequence is DEVNNPSLTV…IFEKWSASML (140 aa). Cu cation is bound by residues His161, Cys196, Glu198, Cys200, His204, and Met207. Position 198 (Glu198) interacts with Mg(2+).

The protein belongs to the cytochrome c oxidase subunit 2 family. Component of the cytochrome c oxidase (complex IV, CIV), a multisubunit enzyme composed of 14 subunits. The complex is composed of a catalytic core of 3 subunits MT-CO1, MT-CO2 and MT-CO3, encoded in the mitochondrial DNA, and 11 supernumerary subunits COX4I, COX5A, COX5B, COX6A, COX6B, COX6C, COX7A, COX7B, COX7C, COX8 and NDUFA4, which are encoded in the nuclear genome. The complex exists as a monomer or a dimer and forms supercomplexes (SCs) in the inner mitochondrial membrane with NADH-ubiquinone oxidoreductase (complex I, CI) and ubiquinol-cytochrome c oxidoreductase (cytochrome b-c1 complex, complex III, CIII), resulting in different assemblies (supercomplex SCI(1)III(2)IV(1) and megacomplex MCI(2)III(2)IV(2)). Found in a complex with TMEM177, COA6, COX18, COX20, SCO1 and SCO2. Interacts with TMEM177 in a COX20-dependent manner. Interacts with COX20. Interacts with COX16. Cu cation serves as cofactor.

The protein localises to the mitochondrion inner membrane. It carries out the reaction 4 Fe(II)-[cytochrome c] + O2 + 8 H(+)(in) = 4 Fe(III)-[cytochrome c] + 2 H2O + 4 H(+)(out). Component of the cytochrome c oxidase, the last enzyme in the mitochondrial electron transport chain which drives oxidative phosphorylation. The respiratory chain contains 3 multisubunit complexes succinate dehydrogenase (complex II, CII), ubiquinol-cytochrome c oxidoreductase (cytochrome b-c1 complex, complex III, CIII) and cytochrome c oxidase (complex IV, CIV), that cooperate to transfer electrons derived from NADH and succinate to molecular oxygen, creating an electrochemical gradient over the inner membrane that drives transmembrane transport and the ATP synthase. Cytochrome c oxidase is the component of the respiratory chain that catalyzes the reduction of oxygen to water. Electrons originating from reduced cytochrome c in the intermembrane space (IMS) are transferred via the dinuclear copper A center (CU(A)) of subunit 2 and heme A of subunit 1 to the active site in subunit 1, a binuclear center (BNC) formed by heme A3 and copper B (CU(B)). The BNC reduces molecular oxygen to 2 water molecules using 4 electrons from cytochrome c in the IMS and 4 protons from the mitochondrial matrix. In Balaenoptera borealis (Sei whale), this protein is Cytochrome c oxidase subunit 2 (MT-CO2).